An 80-amino-acid polypeptide reads, in one-letter code: Exodeoxyribonuclease 7 small subunit (80 aa).

Belongs to the XseB family. Heterooligomer composed of large and small subunits.

It localises to the cytoplasm. The catalysed reaction is Exonucleolytic cleavage in either 5'- to 3'- or 3'- to 5'-direction to yield nucleoside 5'-phosphates.. Its function is as follows. Bidirectionally degrades single-stranded DNA into large acid-insoluble oligonucleotides, which are then degraded further into small acid-soluble oligonucleotides. The polypeptide is Exodeoxyribonuclease 7 small subunit (Pseudomonas putida (strain GB-1)).